A 333-amino-acid chain; its full sequence is Electron transfer flavoprotein subunit alpha, mitochondrial (333 aa).

The transit peptide at 1–19 directs the protein to the mitochondrion; it reads MFRAAAPGQLRRAASSLRF. The interval 20 to 204 is domain I; that stretch reads QSTLVIAEHA…EISEWLDQKL (185 aa). N6-acetyllysine; alternate is present on Lys59. An N6-succinyllysine; alternate modification is found at Lys59. An N6-acetyllysine modification is found at Lys62. Lys69 carries the post-translational modification N6-acetyllysine; alternate. Lys69 bears the N6-succinyllysine; alternate mark. Lys75 is modified (N6-acetyllysine). The residue at position 93 (Thr93) is a Phosphothreonine. 2 positions are modified to N6-acetyllysine: Lys101 and Lys139. Ser140 carries the phosphoserine modification. The residue at position 158 (Lys158) is an N6-acetyllysine; alternate. Lys158 bears the N6-succinyllysine; alternate mark. N6-acetyllysine is present on Lys164. At Lys187 the chain carries N6-succinyllysine. N6-acetyllysine; alternate is present on Lys203. An N6-succinyllysine; alternate modification is found at Lys203. The domain II stretch occupies residues 205 to 333; sequence TKSDRPELTG…PEMTEILKKK (129 aa). Lys216 bears the N6-succinyllysine mark. Arg223 is an FAD binding site. An N6-acetyllysine; alternate mark is found at Lys226 and Lys232. 2 positions are modified to N6-succinyllysine; alternate: Lys226 and Lys232. FAD-binding positions include Ser248, 263 to 266, 281 to 286, and Asn300; these read VGQT and SGAIQH. Lys301 carries the post-translational modification N6-succinyllysine. 318–319 contacts FAD; that stretch reads DL.

It belongs to the ETF alpha-subunit/FixB family. In terms of assembly, heterodimer composed of ETFA and ETFB. Identified in a complex that contains ETFA, ETFB and ETFRF1. Interaction with ETFRF1 promotes dissociation of the bound FAD and loss of electron transfer activity. Interacts with TASOR. FAD serves as cofactor.

Its subcellular location is the mitochondrion matrix. Functionally, heterodimeric electron transfer flavoprotein that accepts electrons from several mitochondrial dehydrogenases, including acyl-CoA dehydrogenases, glutaryl-CoA and sarcosine dehydrogenase. It transfers the electrons to the main mitochondrial respiratory chain via ETF-ubiquinone oxidoreductase (ETF dehydrogenase). Required for normal mitochondrial fatty acid oxidation and normal amino acid metabolism. The protein is Electron transfer flavoprotein subunit alpha, mitochondrial (ETFA) of Macaca fascicularis (Crab-eating macaque).